The sequence spans 224 residues: UPF0111 protein CPn_0681/CP_0066/CPj0681/CpB0708 (224 aa).

This sequence belongs to the UPF0111 family.

This chain is UPF0111 protein CPn_0681/CP_0066/CPj0681/CpB0708, found in Chlamydia pneumoniae (Chlamydophila pneumoniae).